Consider the following 501-residue polypeptide: Glutathione gamma-glutamylcysteinyltransferase 1 (501 aa).

The Peptidase C83 domain maps to 1 to 221 (MAMAGLYRRL…GFMLISRPHR (221 aa)). Catalysis depends on residues Cys-56, His-162, and Asp-180.

This sequence belongs to the phytochelatin synthase family. In terms of tissue distribution, expressed in roots, nodules and leaves.

The enzyme catalyses [Glu(-Cys)](n)-Gly + glutathione + H(+) = [Glu(-Cys)](n+1)-Gly + glycine. Its activity is regulated as follows. Requires cadmium for activity. Also activated in vitro by Zn(2+), Cu(2+), Fe(2+) or Fe(3+) ions, but not by Co(2+) or Ni(2+) ions. Its function is as follows. Involved in the synthesis of phytochelatins (PC) and homophytochelatins (hPC), the heavy-metal-binding peptides of plants. The sequence is that of Glutathione gamma-glutamylcysteinyltransferase 1 (PCS1) from Lotus japonicus (Lotus corniculatus var. japonicus).